A 441-amino-acid polypeptide reads, in one-letter code: Glutamate--tRNA ligase 2 (441 aa).

Positions 9–19 match the 'HIGH' region motif; that stretch reads PSPTGYIHVGN. A 'KMSKS' region motif is present at residues 239–243; that stretch reads ALSKR. Lys242 lines the ATP pocket.

Belongs to the class-I aminoacyl-tRNA synthetase family. Glutamate--tRNA ligase type 1 subfamily. Monomer.

Its subcellular location is the cytoplasm. It catalyses the reaction tRNA(Glu) + L-glutamate + ATP = L-glutamyl-tRNA(Glu) + AMP + diphosphate. Its function is as follows. Catalyzes the attachment of glutamate to tRNA(Glu) in a two-step reaction: glutamate is first activated by ATP to form Glu-AMP and then transferred to the acceptor end of tRNA(Glu). The polypeptide is Glutamate--tRNA ligase 2 (Cereibacter sphaeroides (strain ATCC 17023 / DSM 158 / JCM 6121 / CCUG 31486 / LMG 2827 / NBRC 12203 / NCIMB 8253 / ATH 2.4.1.) (Rhodobacter sphaeroides)).